The sequence spans 396 residues: ATP-dependent RNA helicase eIF4A (396 aa).

The Q motif motif lies at 22–50; that stretch reads YSFDDLKLKEELLRGIFGYGFVEPSAIQQ. The Helicase ATP-binding domain occupies 53–223; that stretch reads ILPIIEGKDV…SKFMKDPVRI (171 aa). 66-73 provides a ligand contact to ATP; that stretch reads AQSGTGKT. The DEAD box signature appears at 171–174; the sequence is DEAD. Residues 234–395 enclose the Helicase C-terminal domain; sequence GIGQYYVNVE…ELPSSISELF (162 aa).

Belongs to the DEAD box helicase family. eIF4A subfamily. Component of the eIF4F complex, which composition varies with external and internal environmental conditions. It is composed of at least eIF4A, eIF4E and eIF4G.

It is found in the cytoplasm. It catalyses the reaction ATP + H2O = ADP + phosphate + H(+). Its function is as follows. ATP-dependent RNA helicase which is a subunit of the eIF4F complex involved in cap recognition and is required for mRNA binding to ribosome. In the current model of translation initiation, eIF4A unwinds RNA secondary structures in the 5'-UTR of mRNAs which is necessary to allow efficient binding of the small ribosomal subunit, and subsequent scanning for the initiator codon. This is ATP-dependent RNA helicase eIF4A (TIF1) from Kluyveromyces lactis (strain ATCC 8585 / CBS 2359 / DSM 70799 / NBRC 1267 / NRRL Y-1140 / WM37) (Yeast).